The primary structure comprises 302 residues: UDP-3-O-acyl-N-acetylglucosamine deacetylase (302 aa).

Zn(2+) is bound by residues His-82, His-238, and Asp-242. His-265 (proton donor) is an active-site residue.

The protein belongs to the LpxC family. The cofactor is Zn(2+).

The catalysed reaction is a UDP-3-O-[(3R)-3-hydroxyacyl]-N-acetyl-alpha-D-glucosamine + H2O = a UDP-3-O-[(3R)-3-hydroxyacyl]-alpha-D-glucosamine + acetate. Its pathway is glycolipid biosynthesis; lipid IV(A) biosynthesis; lipid IV(A) from (3R)-3-hydroxytetradecanoyl-[acyl-carrier-protein] and UDP-N-acetyl-alpha-D-glucosamine: step 2/6. Functionally, catalyzes the hydrolysis of UDP-3-O-myristoyl-N-acetylglucosamine to form UDP-3-O-myristoylglucosamine and acetate, the committed step in lipid A biosynthesis. This is UDP-3-O-acyl-N-acetylglucosamine deacetylase from Leptospira biflexa serovar Patoc (strain Patoc 1 / Ames).